The chain runs to 625 residues: Putative surface protein bspA-like (625 aa).

The Extracellular portion of the chain corresponds to 1-548 (MMTPGKSSKT…KAIKGGEIAG (548 aa)). An N-linked (GlcNAc...) asparagine glycan is attached at Asn15. LRR repeat units follow at residues 38–60 (CSSFTSIIIPNSVTSIGTKAFTG), 61–83 (CSSLTSITIGNSVTSFGQEAFSE), 85–106 (SSITSITIPNSVTTIRDFAFSG), 107–129 (CSKLTSITIPNSVTSLGSHAFRG), 153–175 (CSSLTSITIPNSVTSIYSSAFYG), 176–198 (CSSLTSITIPDSVLDFGSAAFQE), 200–221 (SKLTNIKIGNNVDSIGSLAFKR), 222–245 (CSSLTNITIPDSVTTIANSAFYEC), 247–267 (KLTSITIGKSVTRIEGNAFSK), 271–293 (LTSITIKTTNDITSSITTDVFLN), 325–347 (IPKSDSNSMIRLQEITSLPTLTH), 348–368 (FTNLNKVTIENINELTIPESF), and 369–392 (IEGDNFEILITNNIKSIDPNAFKD). N-linked (GlcNAc...) asparagine glycosylation is present at Asn227. Positions 439–538 (KQSEENPNQP…TDDPSKSKEN (100 aa)) are disordered. Residues 443-526 (ENPNQPGENP…QPGENPSQPG (84 aa)) are compositionally biased toward low complexity. A helical membrane pass occupies residues 549–571 (IIIGSLIGICLVVAICFGVYYYF). At 572–625 (MRIKPKNKNDDNEGNQEDTIANGTNEVTNENVLATFDEQPNNESDSNGLDSAEV) the chain is on the cytoplasmic side. The interval 577 to 625 (KNKNDDNEGNQEDTIANGTNEVTNENVLATFDEQPNNESDSNGLDSAEV) is disordered. The span at 588-625 (EDTIANGTNEVTNENVLATFDEQPNNESDSNGLDSAEV) shows a compositional bias: polar residues.

Its subcellular location is the cell membrane. Its function is as follows. May bind host tissue. The chain is Putative surface protein bspA-like (BSPAL1) from Trichomonas vaginalis.